We begin with the raw amino-acid sequence, 187 residues long: Mast cell-expressed membrane protein 1 (187 aa).

The Cytoplasmic segment spans residues 1–85 (MEVEEIYKHQ…PCWLYRAILS (85 aa)). The tract at residues 49 to 71 (DHAKGGHSRPTSQVPAQCRPPSD) is disordered. A helical; Signal-anchor for type II membrane protein transmembrane segment spans residues 86-106 (LYILLALAFVLCIILSAFIMV). The Extracellular segment spans residues 107–187 (KNAEMSKELL…LQKMPQSSPQ (81 aa)). N-linked (GlcNAc...) asparagine glycosylation is present at Asn124.

Expressed specifically in mast cells. Found primarily in lung.

It localises to the membrane. This is Mast cell-expressed membrane protein 1 from Homo sapiens (Human).